The chain runs to 127 residues: Glycine cleavage system H protein (127 aa).

Residues Lys22 to Glu104 enclose the Lipoyl-binding domain. Lys63 carries the post-translational modification N6-lipoyllysine.

The protein belongs to the GcvH family. In terms of assembly, the glycine cleavage system is composed of four proteins: P, T, L and H. The cofactor is (R)-lipoate.

Its function is as follows. The glycine cleavage system catalyzes the degradation of glycine. The H protein shuttles the methylamine group of glycine from the P protein to the T protein. Is also involved in protein lipoylation via its role as an octanoyl/lipoyl carrier protein intermediate. This is Glycine cleavage system H protein from Bacillus subtilis (strain 168).